The primary structure comprises 196 residues: Pyridoxal 5'-phosphate synthase subunit PdxT (196 aa).

52 to 54 (GES) contributes to the L-glutamine binding site. Residue C84 is the Nucleophile of the active site. L-glutamine contacts are provided by residues R113 and 141-142 (IR). Residues H178 and E180 each act as charge relay system in the active site.

It belongs to the glutaminase PdxT/SNO family. In the presence of PdxS, forms a dodecamer of heterodimers. Only shows activity in the heterodimer.

The enzyme catalyses aldehydo-D-ribose 5-phosphate + D-glyceraldehyde 3-phosphate + L-glutamine = pyridoxal 5'-phosphate + L-glutamate + phosphate + 3 H2O + H(+). The catalysed reaction is L-glutamine + H2O = L-glutamate + NH4(+). Its pathway is cofactor biosynthesis; pyridoxal 5'-phosphate biosynthesis. In terms of biological role, catalyzes the hydrolysis of glutamine to glutamate and ammonia as part of the biosynthesis of pyridoxal 5'-phosphate. The resulting ammonia molecule is channeled to the active site of PdxS. This Pyrococcus abyssi (strain GE5 / Orsay) protein is Pyridoxal 5'-phosphate synthase subunit PdxT.